Reading from the N-terminus, the 410-residue chain is Gamma-glutamyl phosphate reductase (410 aa).

This sequence belongs to the gamma-glutamyl phosphate reductase family.

Its subcellular location is the cytoplasm. It catalyses the reaction L-glutamate 5-semialdehyde + phosphate + NADP(+) = L-glutamyl 5-phosphate + NADPH + H(+). It participates in amino-acid biosynthesis; L-proline biosynthesis; L-glutamate 5-semialdehyde from L-glutamate: step 2/2. Its function is as follows. Catalyzes the NADPH-dependent reduction of L-glutamate 5-phosphate into L-glutamate 5-semialdehyde and phosphate. The product spontaneously undergoes cyclization to form 1-pyrroline-5-carboxylate. The chain is Gamma-glutamyl phosphate reductase from Sulfurovum sp. (strain NBC37-1).